The primary structure comprises 241 residues: ATP synthase subunit a (241 aa).

The next 5 membrane-spanning stretches (helical) occupy residues 30 to 50 (GQVF…VLVG), 89 to 109 (LPFI…GALI), 128 to 148 (INTT…AGLS), 193 to 213 (LAVG…VMLL), and 214 to 234 (GLFT…FYIG).

Belongs to the ATPase A chain family. F-type ATPases have 2 components, CF(1) - the catalytic core - and CF(0) - the membrane proton channel. CF(1) has five subunits: alpha(3), beta(3), gamma(1), delta(1), epsilon(1). CF(0) has four main subunits: a, b, b' and c.

It is found in the cellular thylakoid membrane. In terms of biological role, key component of the proton channel; it plays a direct role in the translocation of protons across the membrane. The protein is ATP synthase subunit a of Synechococcus sp. (strain CC9902).